The sequence spans 190 residues: Adenylate kinase (190 aa).

10–15 (AAGKGT) contributes to the ATP binding site. The tract at residues 30–59 (STGDMLRAAIASGSELGQRVSGIMERGELV) is NMP. AMP-binding positions include Thr31, Arg36, 57–59 (ELV), 85–88 (GFPR), and Gln92. Residues 126–136 (GRFAESGRADD) are LID. Arg127 is a binding site for ATP. AMP is bound by residues Arg133 and Arg144. Gly172 contacts ATP.

The protein belongs to the adenylate kinase family. Monomer.

The protein localises to the cytoplasm. The catalysed reaction is AMP + ATP = 2 ADP. Its pathway is purine metabolism; AMP biosynthesis via salvage pathway; AMP from ADP: step 1/1. Catalyzes the reversible transfer of the terminal phosphate group between ATP and AMP. Plays an important role in cellular energy homeostasis and in adenine nucleotide metabolism. The protein is Adenylate kinase of Phenylobacterium zucineum (strain HLK1).